Consider the following 86-residue polypeptide: Large ribosomal subunit protein bL28 (86 aa).

Belongs to the bacterial ribosomal protein bL28 family.

The protein is Large ribosomal subunit protein bL28 of Bacteroides fragilis (strain ATCC 25285 / DSM 2151 / CCUG 4856 / JCM 11019 / LMG 10263 / NCTC 9343 / Onslow / VPI 2553 / EN-2).